Reading from the N-terminus, the 287-residue chain is Bifunctional protein FolD (287 aa).

NADP(+)-binding positions include 171 to 173 (GHS), Ile196, and Ile237.

Belongs to the tetrahydrofolate dehydrogenase/cyclohydrolase family. Homodimer.

It catalyses the reaction (6R)-5,10-methylene-5,6,7,8-tetrahydrofolate + NADP(+) = (6R)-5,10-methenyltetrahydrofolate + NADPH. The enzyme catalyses (6R)-5,10-methenyltetrahydrofolate + H2O = (6R)-10-formyltetrahydrofolate + H(+). It functions in the pathway one-carbon metabolism; tetrahydrofolate interconversion. Its function is as follows. Catalyzes the oxidation of 5,10-methylenetetrahydrofolate to 5,10-methenyltetrahydrofolate and then the hydrolysis of 5,10-methenyltetrahydrofolate to 10-formyltetrahydrofolate. The protein is Bifunctional protein FolD of Methanosarcina mazei (strain ATCC BAA-159 / DSM 3647 / Goe1 / Go1 / JCM 11833 / OCM 88) (Methanosarcina frisia).